Reading from the N-terminus, the 1836-residue chain is U3 small nucleolar RNA-associated protein 10 (1836 aa).

The HEAT 1 repeat unit spans residues 245-283 (EVVGFLLLPSKYETLRNIDVDTRLTAYSIIAVLASIIPI). The interval 453 to 473 (SNSSVRDSDDVEFDAGEEDNN) is disordered. Residues 461–473 (DDVEFDAGEEDNN) show a composition bias toward acidic residues. HEAT repeat units follow at residues 585-623 (PLDLYLLIPIFLLGVYDETRVVRAGFVQLLRFIKETTTS) and 813-850 (VENRIKIVNKLIDLLNNDEPIESDPMDTLQTLKLDQDL). A disordered region spans residues 863–883 (QIPEQGPAKRRRRSSSSTKQA). 2 helical membrane-spanning segments follow: residues 998-1018 (LLLVIAELASLAPEIVLHSVM) and 1085-1105 (LFTYLIRTLGSDLSLHVLLFL). HEAT repeat units lie at residues 1333–1372 (ESVLEKLLPVLLHGIKKNVDIELEQAYLDTFAIIVNKFGA), 1749–1787 (ETLVHGLIKYISNEKEDNSSSTKIWTIRALKSIFQKMGE), and 1790–1828 (LTYLPTLIPYIAELLEDDDQAVEMEVRSGLVRVIENVLG).

It belongs to the HEATR1/UTP10 family. As to quaternary structure, component of the ribosomal small subunit (SSU) processome.

It is found in the nucleus. It localises to the nucleolus. Its subcellular location is the membrane. Involved in nucleolar processing of pre-18S ribosomal RNA. Involved in ribosome biosynthesis. The sequence is that of U3 small nucleolar RNA-associated protein 10 from Scheffersomyces stipitis (strain ATCC 58785 / CBS 6054 / NBRC 10063 / NRRL Y-11545) (Yeast).